A 73-amino-acid chain; its full sequence is MPALHIEDLPEKEKLKMEVEQLRKEVKLQRQQVSKCSEEIKNYIEERSREDPLVKGIPEDKNPFKEKGSCIIS.

A disordered region spans residues 54-73 (VKGIPEDKNPFKEKGSCIIS). Cys-70 carries the cysteine methyl ester modification. Cys-70 carries S-farnesyl cysteine lipidation. The propeptide at 71-73 (IIS) is removed in mature form.

The protein belongs to the G protein gamma family. G proteins are composed of 3 units, alpha, beta and gamma. Interacts with beta-1 and beta-3, but not with beta-2.

Its subcellular location is the cell membrane. Guanine nucleotide-binding proteins (G proteins) are involved as a modulator or transducer in various transmembrane signaling systems. The beta and gamma chains are required for the GTPase activity, for replacement of GDP by GTP, and for G protein-effector interaction. This Bos taurus (Bovine) protein is Guanine nucleotide-binding protein G(I)/G(S)/G(O) subunit gamma-11 (GNG11).